Here is a 314-residue protein sequence, read N- to C-terminus: 4-hydroxy-3-methylbut-2-enyl diphosphate reductase (314 aa).

Cys-12 serves as a coordination point for [4Fe-4S] cluster. His-43 and His-81 together coordinate (2E)-4-hydroxy-3-methylbut-2-enyl diphosphate. Dimethylallyl diphosphate-binding residues include His-43 and His-81. His-43 and His-81 together coordinate isopentenyl diphosphate. Cys-103 contacts [4Fe-4S] cluster. Residue His-131 participates in (2E)-4-hydroxy-3-methylbut-2-enyl diphosphate binding. His-131 is a binding site for dimethylallyl diphosphate. His-131 provides a ligand contact to isopentenyl diphosphate. Catalysis depends on Glu-133, which acts as the Proton donor. Thr-170 is a (2E)-4-hydroxy-3-methylbut-2-enyl diphosphate binding site. Cys-198 is a [4Fe-4S] cluster binding site. (2E)-4-hydroxy-3-methylbut-2-enyl diphosphate contacts are provided by Ser-226, Asn-228, and Ser-271. Ser-226, Asn-228, and Ser-271 together coordinate dimethylallyl diphosphate. Residues Ser-226, Asn-228, and Ser-271 each coordinate isopentenyl diphosphate.

This sequence belongs to the IspH family. It depends on [4Fe-4S] cluster as a cofactor.

The catalysed reaction is isopentenyl diphosphate + 2 oxidized [2Fe-2S]-[ferredoxin] + H2O = (2E)-4-hydroxy-3-methylbut-2-enyl diphosphate + 2 reduced [2Fe-2S]-[ferredoxin] + 2 H(+). It carries out the reaction dimethylallyl diphosphate + 2 oxidized [2Fe-2S]-[ferredoxin] + H2O = (2E)-4-hydroxy-3-methylbut-2-enyl diphosphate + 2 reduced [2Fe-2S]-[ferredoxin] + 2 H(+). Its pathway is isoprenoid biosynthesis; dimethylallyl diphosphate biosynthesis; dimethylallyl diphosphate from (2E)-4-hydroxy-3-methylbutenyl diphosphate: step 1/1. It functions in the pathway isoprenoid biosynthesis; isopentenyl diphosphate biosynthesis via DXP pathway; isopentenyl diphosphate from 1-deoxy-D-xylulose 5-phosphate: step 6/6. Catalyzes the conversion of 1-hydroxy-2-methyl-2-(E)-butenyl 4-diphosphate (HMBPP) into a mixture of isopentenyl diphosphate (IPP) and dimethylallyl diphosphate (DMAPP). Acts in the terminal step of the DOXP/MEP pathway for isoprenoid precursor biosynthesis. The polypeptide is 4-hydroxy-3-methylbut-2-enyl diphosphate reductase (Bacillus licheniformis (strain ATCC 14580 / DSM 13 / JCM 2505 / CCUG 7422 / NBRC 12200 / NCIMB 9375 / NCTC 10341 / NRRL NRS-1264 / Gibson 46)).